A 916-amino-acid chain; its full sequence is Nonsense-mediated mRNA decay factor SMG8 (916 aa).

The segment at 566-626 (LENSNRTPDT…KNYASQGDAD (61 aa)) is disordered. The segment covering 589–604 (LSGSQKSQDSASNLTF) has biased composition (polar residues).

It belongs to the SMG8 family.

Its function is as follows. Involved in nonsense-mediated decay (NMD) of mRNAs containing premature stop codons. Probable component of kinase complex containing SMG1 and recruited to stalled ribosomes. The chain is Nonsense-mediated mRNA decay factor SMG8 from Aedes aegypti (Yellowfever mosquito).